The following is a 241-amino-acid chain: Triosephosphate isomerase (241 aa).

Asparagine 9–lysine 11 provides a ligand contact to substrate. The active-site Electrophile is histidine 96. Catalysis depends on glutamate 165, which acts as the Proton acceptor. Substrate-binding positions include glycine 171, serine 204, and glycine 225–glycine 226.

Belongs to the triosephosphate isomerase family. Homodimer.

It is found in the cytoplasm. It carries out the reaction D-glyceraldehyde 3-phosphate = dihydroxyacetone phosphate. It participates in carbohydrate biosynthesis; gluconeogenesis. Its pathway is carbohydrate degradation; glycolysis; D-glyceraldehyde 3-phosphate from glycerone phosphate: step 1/1. Functionally, involved in the gluconeogenesis. Catalyzes stereospecifically the conversion of dihydroxyacetone phosphate (DHAP) to D-glyceraldehyde-3-phosphate (G3P). The sequence is that of Triosephosphate isomerase from Prochlorococcus marinus (strain MIT 9312).